We begin with the raw amino-acid sequence, 317 residues long: MLMPLSFSLQTKEELARVKARHPCCRQAELVAFLRLGNLDGGQPGEETVLFTTPYPALARKVYSLAREFLACPVKVRNSRRQGKGRPVFRVVARARLKEIQDWLAGRAGVPEYPCCQAAYMRGAFLVTGSVNKPSGTHHLELIFPDAAMAGQMQGLMQQQELEPRLSRRQRGYVLYLKDSEQIIRALSLMGAYSAVLAYENVLIFKDMRNRVNRLVNCETANLTKTVETGLRQAENIRYLIATVGWDYLPPALREIAAVRLQHPEASLKELGEMLHPPVGKSGVNHRLRRLELIARQVRGQGREGYAPDDDLSRPRA.

The H-T-H motif DNA-binding region spans 267 to 300 (SLKELGEMLHPPVGKSGVNHRLRRLELIARQVRG).

The protein belongs to the WhiA family.

Functionally, involved in cell division and chromosome segregation. The protein is Probable cell division protein WhiA of Moorella thermoacetica (strain ATCC 39073 / JCM 9320).